A 132-amino-acid polypeptide reads, in one-letter code: Photosystem II extrinsic protein U (132 aa).

An N-terminal signal peptide occupies residues 1 to 29; that stretch reads MKRLLSWLTGALVMAGLLSSLVLPSAVYA.

This sequence belongs to the PsbU family. As to quaternary structure, PSII is composed of 1 copy each of membrane proteins PsbA, PsbB, PsbC, PsbD, PsbE, PsbF, PsbH, PsbI, PsbJ, PsbK, PsbL, PsbM, PsbT, PsbX, PsbY, PsbZ, Psb30/Ycf12, peripheral proteins PsbO, CyanoQ (PsbQ), PsbU, PsbV and a large number of cofactors. It forms dimeric complexes.

The protein resides in the cellular thylakoid membrane. In terms of biological role, one of the extrinsic, lumenal subunits of photosystem II (PSII). PSII is a light-driven water plastoquinone oxidoreductase, using light energy to abstract electrons from H(2)O, generating a proton gradient subsequently used for ATP formation. The extrinsic proteins stabilize the structure of photosystem II oxygen-evolving complex (OEC), the ion environment of oxygen evolution and protect the OEC against heat-induced inactivation. The polypeptide is Photosystem II extrinsic protein U (Synechococcus sp. (strain CC9902)).